A 489-amino-acid chain; its full sequence is Mitogen-activated protein kinase adapter protein MST50 (489 aa).

The disordered stretch occupies residues methionine 1–serine 56. A compositionally biased stretch (polar residues) spans proline 37–tyrosine 54. Positions tryptophan 69–alanine 132 constitute an SAM domain. Disordered regions lie at residues proline 207–arginine 285 and serine 309–alanine 379. Polar residues-rich tracts occupy residues proline 256–glutamine 265 and alanine 328–alanine 346. Positions serine 377–asparagine 457 constitute a Ras-associating domain.

Interacts with MST7 and MST11. Interacts with MCK1, MKK2 and HIK1.

Mitogen-activated protein kinase adapter protein; part of the MST11-MST7-PMK1 MAP kinase (MAPK) cascade that is essential for appressorium formation, penetration and invasive growth. Binds to the MAPKKK MST11 and the MAPKK MST7 to maintain the stability of the MST11-MST7 complex for the phosphorylation of the MAPK PMK1. Is also involved in the MPS1 and OSM1 MAPK pathways, and especially plays a role in the activation of MPS1 in response to cell wall stress. Its function differs in the 3 MAPK pathways. The polypeptide is Mitogen-activated protein kinase adapter protein MST50 (Pyricularia oryzae (strain 70-15 / ATCC MYA-4617 / FGSC 8958) (Rice blast fungus)).